A 374-amino-acid polypeptide reads, in one-letter code: Histidinol-phosphate aminotransferase (374 aa).

An N6-(pyridoxal phosphate)lysine modification is found at Lys215.

Belongs to the class-II pyridoxal-phosphate-dependent aminotransferase family. Histidinol-phosphate aminotransferase subfamily. In terms of assembly, homodimer. It depends on pyridoxal 5'-phosphate as a cofactor.

It catalyses the reaction L-histidinol phosphate + 2-oxoglutarate = 3-(imidazol-4-yl)-2-oxopropyl phosphate + L-glutamate. The protein operates within amino-acid biosynthesis; L-histidine biosynthesis; L-histidine from 5-phospho-alpha-D-ribose 1-diphosphate: step 7/9. In Yersinia enterocolitica serotype O:8 / biotype 1B (strain NCTC 13174 / 8081), this protein is Histidinol-phosphate aminotransferase.